Reading from the N-terminus, the 580-residue chain is Glutamine--tRNA ligase (580 aa).

Positions 41–51 (PEPNGYLHIGH) match the 'HIGH' region motif. ATP is bound by residues 42 to 44 (EPN) and 48 to 54 (HIGHAKA). L-glutamine is bound by residues Asp74 and Tyr218. Residues Thr237, 285–286 (RL), and 293–295 (MSK) each bind ATP. The 'KMSKS' region signature appears at 292–296 (VMSKR).

This sequence belongs to the class-I aminoacyl-tRNA synthetase family. In terms of assembly, monomer.

The protein localises to the cytoplasm. It carries out the reaction tRNA(Gln) + L-glutamine + ATP = L-glutaminyl-tRNA(Gln) + AMP + diphosphate. This Xylella fastidiosa (strain M12) protein is Glutamine--tRNA ligase.